Here is a 24-residue protein sequence, read N- to C-terminus: Humanin-like 7 (24 aa).

This sequence belongs to the humanin family. As to expression, expressed in testis.

Its subcellular location is the secreted. It is found in the cytoplasm. Functionally, plays a role as a neuroprotective and antiapoptotic factor. The chain is Humanin-like 7 from Homo sapiens (Human).